The sequence spans 270 residues: Putative pyruvate, phosphate dikinase regulatory protein (270 aa).

An ADP-binding site is contributed by 149–156 (GVSRTSKT).

The protein belongs to the pyruvate, phosphate/water dikinase regulatory protein family. PDRP subfamily.

The catalysed reaction is N(tele)-phospho-L-histidyl/L-threonyl-[pyruvate, phosphate dikinase] + ADP = N(tele)-phospho-L-histidyl/O-phospho-L-threonyl-[pyruvate, phosphate dikinase] + AMP + H(+). The enzyme catalyses N(tele)-phospho-L-histidyl/O-phospho-L-threonyl-[pyruvate, phosphate dikinase] + phosphate + H(+) = N(tele)-phospho-L-histidyl/L-threonyl-[pyruvate, phosphate dikinase] + diphosphate. Functionally, bifunctional serine/threonine kinase and phosphorylase involved in the regulation of the pyruvate, phosphate dikinase (PPDK) by catalyzing its phosphorylation/dephosphorylation. This is Putative pyruvate, phosphate dikinase regulatory protein from Thermoanaerobacter pseudethanolicus (strain ATCC 33223 / 39E) (Clostridium thermohydrosulfuricum).